The primary structure comprises 433 residues: MTITVLKSAPGLPPAPQGDAADVVQVMLARLRAEGEAAARDYAARLDGWSGEIVVSPDQVARASEQVPEDLKTQIRYAHDNIRRFAEAQRASALDFQTELRPGLIAGQKQIPLAAAGAYVPGGRYAHIASALMSIATARAAGVGQITAVSPPQVGRGVHPAILYAMSLAGADRILALGGVQGVAALAFGLFGAPPADILVGPGNQFVAEAKRQLFGPVGIDMFAGPTDSLVIADSTADPLTVAWDLVGQAEHGYNSPVWLVTDSAALAEAVLAHIPGCIADLPEPNRSSAQAAWDALGEVILCTDREEMAATADRYAPEHLHVQAADLDWWRGRLSAYGSLFLGELTTVAFGDKASGPNHVLPTSGAARYTGGLSVHKFLKTVTWQQVAPQALPDLARATATISRAEGMEGHARTADIRLEKLRPTLRQVGTG.

Zn(2+)-binding residues include Gln249 and His252. Residues Glu319 and His320 each act as proton acceptor in the active site. Residues Asp353 and His412 each contribute to the Zn(2+) site.

Belongs to the histidinol dehydrogenase family. The cofactor is Zn(2+).

This chain is Histidinol dehydrogenase homolog, found in Ruegeria pomeroyi (strain ATCC 700808 / DSM 15171 / DSS-3) (Silicibacter pomeroyi).